Reading from the N-terminus, the 508-residue chain is Maturase K (508 aa).

It belongs to the intron maturase 2 family. MatK subfamily.

It localises to the plastid. It is found in the chloroplast. Usually encoded in the trnK tRNA gene intron. Probably assists in splicing its own and other chloroplast group II introns. In Pelargonium hortorum (Common geranium), this protein is Maturase K.